A 217-amino-acid chain; its full sequence is Glutathione S-transferase U20 (217 aa).

Residues 3 to 82 (NLPILLDYWP…YVDEAWPEKN (80 aa)) form the GST N-terminal domain. Glutathione contacts are provided by serine 13, isoleucine 54, and serine 67. Residues 88 to 208 (DPYGRAQARF…LPDSEKIVAY (121 aa)) enclose the GST C-terminal domain.

Belongs to the GST superfamily. Tau family. As to quaternary structure, homodimerization. Interacts with JAR1/FIN219 under continuous far red (cFR) light to stimulate JAR1/FIN219 activity and substrate selectivity. As to expression, mostly associated with vascular tissues, especially near hydathodes.

It is found in the nucleus. The protein localises to the cytoplasm. It localises to the cytosol. It catalyses the reaction RX + glutathione = an S-substituted glutathione + a halide anion + H(+). Activated by JAR1/FIN219. In terms of biological role, exhibits glutathione-dependent thiol transferase activities. Can use glutathione (GSH) and 1-chloro-2,4-dinitrobenzene (CDNB) as substrates. Involved in the regulation of far-red light influence on development. Regulator of the interplay between light and JA signaling by increasing JAR1/FIN219 efficiency. Maybe involved in gravitropic signal transduction. This chain is Glutathione S-transferase U20, found in Arabidopsis thaliana (Mouse-ear cress).